Here is a 22-residue protein sequence, read N- to C-terminus: Hemocyanin subunit 4 (22 aa).

Belongs to the tyrosinase family. Hemocyanin subfamily. In terms of tissue distribution, hemolymph.

Its subcellular location is the secreted. The protein resides in the extracellular space. Hemocyanins are copper-containing oxygen carriers occurring freely dissolved in the hemolymph of many mollusks and arthropods. This Homarus americanus (American lobster) protein is Hemocyanin subunit 4.